We begin with the raw amino-acid sequence, 234 residues long: Large ribosomal subunit protein uL1 (234 aa).

The protein belongs to the universal ribosomal protein uL1 family. As to quaternary structure, part of the 50S ribosomal subunit.

Binds directly to 23S rRNA. The L1 stalk is quite mobile in the ribosome, and is involved in E site tRNA release. Its function is as follows. Protein L1 is also a translational repressor protein, it controls the translation of the L11 operon by binding to its mRNA. This is Large ribosomal subunit protein uL1 from Bdellovibrio bacteriovorus (strain ATCC 15356 / DSM 50701 / NCIMB 9529 / HD100).